Consider the following 360-residue polypeptide: Ferredoxin--NADP reductase 1 (360 aa).

The FAD site is built by aspartate 43, glutamine 51, tyrosine 56, alanine 96, phenylalanine 141, aspartate 307, and serine 348.

This sequence belongs to the ferredoxin--NADP reductase type 2 family. In terms of assembly, homodimer. The cofactor is FAD.

It carries out the reaction 2 reduced [2Fe-2S]-[ferredoxin] + NADP(+) + H(+) = 2 oxidized [2Fe-2S]-[ferredoxin] + NADPH. This chain is Ferredoxin--NADP reductase 1, found in Cupriavidus taiwanensis (strain DSM 17343 / BCRC 17206 / CCUG 44338 / CIP 107171 / LMG 19424 / R1) (Ralstonia taiwanensis (strain LMG 19424)).